We begin with the raw amino-acid sequence, 300 residues long: Aspartate carbamoyltransferase catalytic subunit (300 aa).

Residues Arg54 and Thr55 each coordinate carbamoyl phosphate. Lys82 is an L-aspartate binding site. Residues Arg104, His131, and Gln134 each coordinate carbamoyl phosphate. Residues Arg164 and Arg213 each coordinate L-aspartate. Carbamoyl phosphate is bound by residues Ala256 and Pro257.

It belongs to the aspartate/ornithine carbamoyltransferase superfamily. ATCase family. Heterododecamer (2C3:3R2) of six catalytic PyrB chains organized as two trimers (C3), and six regulatory PyrI chains organized as three dimers (R2).

The catalysed reaction is carbamoyl phosphate + L-aspartate = N-carbamoyl-L-aspartate + phosphate + H(+). It participates in pyrimidine metabolism; UMP biosynthesis via de novo pathway; (S)-dihydroorotate from bicarbonate: step 2/3. Functionally, catalyzes the condensation of carbamoyl phosphate and aspartate to form carbamoyl aspartate and inorganic phosphate, the committed step in the de novo pyrimidine nucleotide biosynthesis pathway. This Malacoplasma penetrans (strain HF-2) (Mycoplasma penetrans) protein is Aspartate carbamoyltransferase catalytic subunit.